The primary structure comprises 479 residues: Glutamate receptor U1 (479 aa).

Positions 1 to 17 (MEKSLLFLFAVTLLSVG) are cleaved as a signal peptide. Topologically, residues 18–163 (CTDAGESKGS…LFGFLTPFSK (146 aa)) are extracellular. An N-linked (GlcNAc...) asparagine glycan is attached at Asn-79. A helical transmembrane segment spans residues 164-184 (ETWIGILVAYMVTSLCLFLVG). The Cytoplasmic segment spans residues 185 to 229 (RLSPCEWTELSTEQNNFTFLNSLWFGAGAFTLQGAEPHPKSVSAR). Residues 230-250 (IIAVIWWIFSIVLVAAYIASF) traverse the membrane as a helical segment. The Extracellular segment spans residues 251-414 (AAFLNSDSVQ…AGWNPVQPHT (164 aa)). Residue Asn-282 is glycosylated (N-linked (GlcNAc...) asparagine). The helical transmembrane segment at 415–435 (LGGIFLILGIGLALGVIAALI) threads the bilayer. Over 436-479 (ELVLKARNNADQQKKSCCSAFSEEMGERLGTNKENQGAVDSVKS) the chain is Cytoplasmic.

This sequence belongs to the glutamate-gated ion channel (TC 1.A.10.1) family. Homomeric.

The protein resides in the cell membrane. Its subcellular location is the postsynaptic cell membrane. Receptor for glutamate. L-glutamate acts as an excitatory neurotransmitter at many synapses in the central nervous system. The postsynaptic actions of Glu are mediated by a variety of receptors that are named according to their selective agonists. This receptor binds domoate &gt; kainate &gt; AMPA &gt; NBQX &gt; glutamate. In Xenopus laevis (African clawed frog), this protein is Glutamate receptor U1 (kbp).